The following is a 209-amino-acid chain: Large ribosomal subunit protein uL3 (209 aa).

The segment at 118–150 (GFQGAIKRHGQSRGPMTHGSRYHRRPGSMGPVD) is disordered.

It belongs to the universal ribosomal protein uL3 family. In terms of assembly, part of the 50S ribosomal subunit. Forms a cluster with proteins L14 and L19.

In terms of biological role, one of the primary rRNA binding proteins, it binds directly near the 3'-end of the 23S rRNA, where it nucleates assembly of the 50S subunit. This chain is Large ribosomal subunit protein uL3, found in Bacillus pumilus (strain SAFR-032).